Consider the following 179-residue polypeptide: Large ribosomal subunit protein uL6 (179 aa).

It belongs to the universal ribosomal protein uL6 family. As to quaternary structure, part of the 50S ribosomal subunit.

This protein binds to the 23S rRNA, and is important in its secondary structure. It is located near the subunit interface in the base of the L7/L12 stalk, and near the tRNA binding site of the peptidyltransferase center. The protein is Large ribosomal subunit protein uL6 of Alkaliphilus oremlandii (strain OhILAs) (Clostridium oremlandii (strain OhILAs)).